Reading from the N-terminus, the 188-residue chain is Elongation factor P (188 aa).

Belongs to the elongation factor P family.

The protein localises to the cytoplasm. Its pathway is protein biosynthesis; polypeptide chain elongation. Involved in peptide bond synthesis. Stimulates efficient translation and peptide-bond synthesis on native or reconstituted 70S ribosomes in vitro. Probably functions indirectly by altering the affinity of the ribosome for aminoacyl-tRNA, thus increasing their reactivity as acceptors for peptidyl transferase. The polypeptide is Elongation factor P (efp) (Rickettsia prowazekii (strain Madrid E)).